The chain runs to 129 residues: Small ribosomal subunit protein uS8 (129 aa).

It belongs to the universal ribosomal protein uS8 family. Part of the 30S ribosomal subunit. Contacts proteins S5 and S12.

Its function is as follows. One of the primary rRNA binding proteins, it binds directly to 16S rRNA central domain where it helps coordinate assembly of the platform of the 30S subunit. This Dichelobacter nodosus (strain VCS1703A) protein is Small ribosomal subunit protein uS8.